We begin with the raw amino-acid sequence, 502 residues long: ATP synthase subunit alpha (502 aa).

Residues 115 to 135 (VDGLGPINTTNTRPIESPAPG) form a disordered region. 169–176 (GDRQTGKT) is a binding site for ATP.

Belongs to the ATPase alpha/beta chains family. As to quaternary structure, F-type ATPases have 2 components, CF(1) - the catalytic core - and CF(0) - the membrane proton channel. CF(1) has five subunits: alpha(3), beta(3), gamma(1), delta(1), epsilon(1). CF(0) has three main subunits: a(1), b(2) and c(9-12). The alpha and beta chains form an alternating ring which encloses part of the gamma chain. CF(1) is attached to CF(0) by a central stalk formed by the gamma and epsilon chains, while a peripheral stalk is formed by the delta and b chains.

It localises to the cell membrane. The enzyme catalyses ATP + H2O + 4 H(+)(in) = ADP + phosphate + 5 H(+)(out). Produces ATP from ADP in the presence of a proton gradient across the membrane. The alpha chain is a regulatory subunit. In Bacillus cereus (strain B4264), this protein is ATP synthase subunit alpha.